The following is a 199-amino-acid chain: MPKVGMPEIRKPQLVKATMSVIDRVGLHAASISLISKEAGVSTGIINHYFGGKHGLLEETMREILRQLSSTITGKLRALPADAHHQRINAIIDGNFVGYQAENKVAKTWLAFWSYSMHDEQLKRLQRVNERRLLSHLRRELKALLSAEQAELVAHGIASLIDGIWLRGTLNPQGIEADKARIIINDYLDKQLTFYSHKI.

In terms of domain architecture, HTH tetR-type spans 8–68; it reads EIRKPQLVKA…ETMREILRQL (61 aa). A DNA-binding region (H-T-H motif) is located at residues 31 to 50; it reads SISLISKEAGVSTGIINHYF.

The protein operates within amine and polyamine biosynthesis; betaine biosynthesis via choline pathway [regulation]. Repressor involved in the biosynthesis of the osmoprotectant glycine betaine. It represses transcription of the choline transporter BetT and the genes of BetAB involved in the synthesis of glycine betaine. This is HTH-type transcriptional regulator BetI from Vibrio parahaemolyticus serotype O3:K6 (strain RIMD 2210633).